The sequence spans 348 residues: D-alanine--D-alanine ligase (348 aa).

Residues 132–334 (KRVLESIGIP…YPDLIEELVT (203 aa)) form the ATP-grasp domain. 162 to 217 (LARLTFPIFVKPANMGSSVGISKAQTKVELRKAIQLALTYDSRVLIEQGVVAREIE) serves as a coordination point for ATP. 3 residues coordinate Mg(2+): aspartate 288, glutamate 301, and asparagine 303.

Belongs to the D-alanine--D-alanine ligase family. Mg(2+) is required as a cofactor. Mn(2+) serves as cofactor.

The protein resides in the cytoplasm. The catalysed reaction is 2 D-alanine + ATP = D-alanyl-D-alanine + ADP + phosphate + H(+). It functions in the pathway cell wall biogenesis; peptidoglycan biosynthesis. Functionally, cell wall formation. This chain is D-alanine--D-alanine ligase, found in Streptococcus pyogenes serotype M18 (strain MGAS8232).